A 364-amino-acid chain; its full sequence is Carbamoyl phosphate synthase pyrimidine-specific small chain (364 aa).

A CPSase region spans residues 1–171 (MKRRLVLENG…AYPSPGRGKR (171 aa)). L-glutamine-binding residues include S45, G219, and G221. Residues 171–356 (RIVLVDFGMK…IEMIETTEKE (186 aa)) enclose the Glutamine amidotransferase type-1 domain. C246 functions as the Nucleophile in the catalytic mechanism. L247, Q250, N288, G290, and Y291 together coordinate L-glutamine. Residues H329 and E331 contribute to the active site.

The protein belongs to the CarA family. In terms of assembly, composed of two chains; the small (or glutamine) chain promotes the hydrolysis of glutamine to ammonia, which is used by the large (or ammonia) chain to synthesize carbamoyl phosphate. Tetramer of heterodimers (alpha,beta)4. Interacts with BrxC.

The catalysed reaction is hydrogencarbonate + L-glutamine + 2 ATP + H2O = carbamoyl phosphate + L-glutamate + 2 ADP + phosphate + 2 H(+). It carries out the reaction L-glutamine + H2O = L-glutamate + NH4(+). Its pathway is pyrimidine metabolism; UMP biosynthesis via de novo pathway; (S)-dihydroorotate from bicarbonate: step 1/3. Small subunit of the glutamine-dependent carbamoyl phosphate synthetase (CPSase). CPSase catalyzes the formation of carbamoyl phosphate from the ammonia moiety of glutamine, carbonate, and phosphate donated by ATP, constituting the first step of the biosynthetic pathway leading to arginine and/or urea. The small subunit (glutamine amidotransferase) binds and cleaves glutamine to supply the large subunit with the substrate ammonia. The protein is Carbamoyl phosphate synthase pyrimidine-specific small chain of Bacillus subtilis (strain 168).